A 238-amino-acid chain; its full sequence is Fatty acid metabolism regulator protein (238 aa).

The region spanning 6 to 74 (KGPASFAEKY…HGKPTRVNNF (69 aa)) is the HTH gntR-type domain. Residues 34–53 (ERELSELIGVTRTTLREVLQ) constitute a DNA-binding region (H-T-H motif).

Homodimer.

The protein localises to the cytoplasm. Multifunctional regulator of fatty acid metabolism. The protein is Fatty acid metabolism regulator protein of Shewanella baltica (strain OS155 / ATCC BAA-1091).